A 559-amino-acid polypeptide reads, in one-letter code: Glucosylglycerate phosphorylase (559 aa).

The active-site Nucleophile is Asp-229.

The protein belongs to the glycosyl hydrolase 13 family. Glucosylglycerate phosphorylase subfamily.

The catalysed reaction is (2R)-2-O-(alpha-D-glucopyranosyl)-glycerate + phosphate = (R)-glycerate + alpha-D-glucose 1-phosphate. Catalyzes the reversible phosphorolysis of glucosylglycerate into alpha-D-glucose 1-phosphate (Glc1P) and D-glycerate (also called (R)-glycerate). May be a regulator of intracellular levels of glucosylglycerate, a compatible solute that primarily protects organisms facing salt stress and very specific nutritional constraints. Cannot catalyze the phosphorolysis of sucrose. Does not act on other sugars such as alpha-D-galactose 1-phosphate, alpha-D-mannose 1-phosphate or beta-D-glucose 1-phosphate; in vitro D-erythronate can substitute for D-glycerate with a much lower efficiency. In Escherichia coli (strain K12), this protein is Glucosylglycerate phosphorylase (ycjM).